Consider the following 65-residue polypeptide: Large ribosomal subunit protein uL29 (65 aa).

This sequence belongs to the universal ribosomal protein uL29 family.

The protein is Large ribosomal subunit protein uL29 of Buchnera aphidicola subsp. Schizaphis graminum (strain Sg).